The sequence spans 179 residues: uncharacterized protein (179 aa).

The disordered stretch occupies residues 1 to 32 (MELQGAQEDLGISLSSPRRNHETRPGSKAKGR).

This is an uncharacterized protein from Homo sapiens (Human).